Consider the following 160-residue polypeptide: Ribosomal RNA large subunit methyltransferase H (160 aa).

S-adenosyl-L-methionine contacts are provided by residues G108 and 127-132; that span reads FGKMTW.

The protein belongs to the RNA methyltransferase RlmH family. In terms of assembly, homodimer.

It localises to the cytoplasm. The catalysed reaction is pseudouridine(1915) in 23S rRNA + S-adenosyl-L-methionine = N(3)-methylpseudouridine(1915) in 23S rRNA + S-adenosyl-L-homocysteine + H(+). Specifically methylates the pseudouridine at position 1915 (m3Psi1915) in 23S rRNA. The sequence is that of Ribosomal RNA large subunit methyltransferase H from Beijerinckia indica subsp. indica (strain ATCC 9039 / DSM 1715 / NCIMB 8712).